We begin with the raw amino-acid sequence, 383 residues long: Lipid-A-disaccharide synthase (383 aa).

Belongs to the LpxB family.

The catalysed reaction is a lipid X + a UDP-2-N,3-O-bis[(3R)-3-hydroxyacyl]-alpha-D-glucosamine = a lipid A disaccharide + UDP + H(+). The protein operates within bacterial outer membrane biogenesis; LPS lipid A biosynthesis. In terms of biological role, condensation of UDP-2,3-diacylglucosamine and 2,3-diacylglucosamine-1-phosphate to form lipid A disaccharide, a precursor of lipid A, a phosphorylated glycolipid that anchors the lipopolysaccharide to the outer membrane of the cell. This chain is Lipid-A-disaccharide synthase, found in Anaeromyxobacter dehalogenans (strain 2CP-C).